The chain runs to 364 residues: 3-dehydroquinate synthase (364 aa).

Residues 71–76 (DGEQYK), 105–109 (GVIGD), 129–130 (TT), K142, K151, and 169–172 (CLKT) each bind NAD(+). The Zn(2+) site is built by E184, H247, and H264.

Belongs to the sugar phosphate cyclases superfamily. Dehydroquinate synthase family. Requires Co(2+) as cofactor. The cofactor is Zn(2+). NAD(+) is required as a cofactor.

Its subcellular location is the cytoplasm. The catalysed reaction is 7-phospho-2-dehydro-3-deoxy-D-arabino-heptonate = 3-dehydroquinate + phosphate. It functions in the pathway metabolic intermediate biosynthesis; chorismate biosynthesis; chorismate from D-erythrose 4-phosphate and phosphoenolpyruvate: step 2/7. Catalyzes the conversion of 3-deoxy-D-arabino-heptulosonate 7-phosphate (DAHP) to dehydroquinate (DHQ). The chain is 3-dehydroquinate synthase from Klebsiella pneumoniae (strain 342).